A 59-amino-acid polypeptide reads, in one-letter code: Large ribosomal subunit protein uL30 (59 aa).

This sequence belongs to the universal ribosomal protein uL30 family. As to quaternary structure, part of the 50S ribosomal subunit.

This is Large ribosomal subunit protein uL30 from Listeria innocua serovar 6a (strain ATCC BAA-680 / CLIP 11262).